A 2201-amino-acid polypeptide reads, in one-letter code: Genome polyprotein (2201 aa).

A lipid anchor (N-myristoyl glycine; by host) is attached at glycine 2. The Cytoplasmic portion of the chain corresponds to 2 to 1511 (GAQVSTQKTG…YVSRAFICLQ (1510 aa)). An amphipathic alpha-helix region spans residues 566–582 (KLQGDVEEAIERARCTV). The short motif at 858-860 (RGD) is the Cell attachment site element. Catalysis depends on for protease 2A activity residues histidine 888 and aspartate 906. Positions 923 and 925 each coordinate Zn(2+). Cysteine 977 acts as the For protease 2A activity in catalysis. Cysteine 983 and histidine 985 together coordinate Zn(2+). The membrane-binding stretch occupies residues 1117–1189 (NDSWLKKFTE…EQSAPSQSDQ (73 aa)). Positions 1117–1255 (NDSWLKKFTE…SPGAGKSVAT (139 aa)) are oligomerization. The tract at residues 1138–1142 (AIKIQ) is RNA-binding. In terms of domain architecture, SF3 helicase spans 1221 to 1377 (EKKMSNYIQF…SMYSQNGKIN (157 aa)). Cysteine 1385, cysteine 1397, and cysteine 1402 together coordinate Zn(2+). Residues 1385 to 1402 (CDEECCPVNFKKCCPLVC) form a C4-type; degenerate zinc finger. The interval 1429 to 1436 (EYNHRHSV) is RNA-binding. Positions 1440 to 1445 (LEALFQ) are oligomerization. The stretch at 1512-1527 (AITTFVSVAGIIYIIY) is an intramembrane region. The Cytoplasmic portion of the chain corresponds to 1528-2201 (KLFAGFQGAY…TLRRKWLDSF (674 aa)). Position 1537 is an O-(5'-phospho-RNA)-tyrosine (tyrosine 1537). The Peptidase C3 domain occupies 1557-1735 (GPAFEFAVAM…FSAALLKHYF (179 aa)). Catalysis depends on for protease 3C activity residues histidine 1596, glutamate 1627, and cysteine 1703. Residues 1966–2082 (GHLIAFDYSG…SYPWPIDASL (117 aa)) form the RdRp catalytic domain. Positions 1972 and 2068 each coordinate Mg(2+).

The protein belongs to the picornaviruses polyprotein family. In terms of assembly, interacts with capsid protein VP1 and capsid protein VP3 to form heterotrimeric protomers. Interacts with capsid protein VP0, and capsid protein VP3 to form heterotrimeric protomers. Five protomers subsequently associate to form pentamers which serve as building blocks for the capsid. Interacts with capsid protein VP2, capsid protein VP3 and capsid protein VP4 following cleavage of capsid protein VP0. Interacts with host integrin heterodimer ITGAV/ITGB6. As to quaternary structure, interacts with capsid protein VP1 and capsid protein VP3 in the mature capsid. In terms of assembly, interacts with capsid protein VP0 and capsid protein VP1 to form heterotrimeric protomers. Five protomers subsequently associate to form pentamers which serve as building blocks for the capsid. Interacts with capsid protein VP4 in the mature capsid. Interacts with protein 2C; this interaction may be important for virion morphogenesis. Interacts with capsid protein VP1 and capsid protein VP3. As to quaternary structure, homodimer. In terms of assembly, homohexamer; forms a hexameric ring structure with 6-fold symmetry characteristic of AAA+ ATPases. Interacts (via N-terminus) with host RTN3 (via reticulon domain); this interaction is important for viral replication. Interacts with capsid protein VP3; this interaction may be important for virion morphogenesis. Interacts with protein 3CD. As to quaternary structure, homodimer. Interacts with host GBF1. Interacts (via GOLD domain) with host ACBD3 (via GOLD domain); this interaction allows the formation of a viral protein 3A/ACBD3 heterotetramer with a 2:2 stoichiometry, which will stimulate the recruitment of host PI4KB in order to synthesize PI4P at the viral RNA replication sites. In terms of assembly, interacts with RNA-directed RNA polymerase. Interacts with protein 3AB and with RNA-directed RNA polymerase. As to quaternary structure, interacts with Viral protein genome-linked and with protein 3CD. It depends on Mg(2+) as a cofactor. Post-translationally, specific enzymatic cleavages in vivo by the viral proteases yield processing intermediates and the mature proteins. In terms of processing, myristoylation is required for the formation of pentamers during virus assembly. Further assembly of 12 pentamers and a molecule of genomic RNA generates the provirion. During virion maturation, immature virions are rendered infectious following cleavage of VP0 into VP4 and VP2. This maturation seems to be an autocatalytic event triggered by the presence of RNA in the capsid and it is followed by a conformational change infectious virion. Post-translationally, myristoylation is required during RNA encapsidation and formation of the mature virus particle. In terms of processing, VPg is uridylylated by the polymerase into VPg-pUpU. This acts as a nucleotide-peptide primer for the genomic RNA replication.

The protein localises to the virion. It is found in the host cytoplasm. It localises to the host cytoplasmic vesicle membrane. The protein resides in the host nucleus. It catalyses the reaction a ribonucleoside 5'-triphosphate + H2O = a ribonucleoside 5'-diphosphate + phosphate + H(+). The enzyme catalyses Selective cleavage of Tyr-|-Gly bond in the picornavirus polyprotein.. It carries out the reaction RNA(n) + a ribonucleoside 5'-triphosphate = RNA(n+1) + diphosphate. The catalysed reaction is Selective cleavage of Gln-|-Gly bond in the poliovirus polyprotein. In other picornavirus reactions Glu may be substituted for Gln, and Ser or Thr for Gly.. With respect to regulation, replication or transcription is subject to high level of random mutations by the nucleotide analog ribavirin. Its function is as follows. Forms an icosahedral capsid of pseudo T=3 symmetry with capsid proteins VP2 and VP3. The capsid is 300 Angstroms in diameter, composed of 60 copies of each capsid protein and enclosing the viral positive strand RNA genome. Capsid protein VP1 mainly forms the vertices of the capsid. Capsid protein VP1 interacts with host integrin ITGAV/ITGB6 to provide virion attachment to target host cells. This attachment induces virion internalization. Tyrosine kinases are probably involved in the entry process. After binding to its receptor, the capsid undergoes conformational changes. Capsid protein VP1 N-terminus (that contains an amphipathic alpha-helix) and capsid protein VP4 are externalized. Together, they shape a pore in the host membrane through which viral genome is translocated to host cell cytoplasm. Functionally, forms an icosahedral capsid of pseudo T=3 symmetry with capsid proteins VP2 and VP3. The capsid is 300 Angstroms in diameter, composed of 60 copies of each capsid protein and enclosing the viral positive strand RNA genome. In terms of biological role, lies on the inner surface of the capsid shell. After binding to the host receptor, the capsid undergoes conformational changes. Capsid protein VP4 is released, Capsid protein VP1 N-terminus is externalized, and together, they shape a pore in the host membrane through which the viral genome is translocated into the host cell cytoplasm. Component of immature procapsids, which is cleaved into capsid proteins VP4 and VP2 after maturation. Allows the capsid to remain inactive before the maturation step. Its function is as follows. Cysteine protease that cleaves viral polyprotein and specific host proteins. It is responsible for the autocatalytic cleavage between the P1 and P2 regions, which is the first cleavage occurring in the polyprotein. Also cleaves the host translation initiation factor EIF4G1, in order to shut down the capped cellular mRNA translation. Inhibits the host nucleus-cytoplasm protein and RNA trafficking by cleaving host members of the nuclear pores. Counteracts stress granule formation probably by antagonizing its assembly or promoting its dissassembly. Cleaves and inhibits host IFIH1/MDA5, thereby inhibiting the type-I IFN production and the establishment of the antiviral state. Cleaves and inhibits host MAVS, thereby inhibiting the type-I IFN production and the establishment of the antiviral state. Functionally, plays an essential role in the virus replication cycle by acting as a viroporin. Creates a pore in the host endoplasmic reticulum and as a consequence releases Ca2+ in the cytoplasm of infected cell. In turn, high levels of cytoplasmic calcium may trigger membrane trafficking and transport of viral ER-associated proteins to viroplasms, sites of viral genome replication. In terms of biological role, induces and associates with structural rearrangements of intracellular membranes. Displays RNA-binding, nucleotide binding and NTPase activities. May play a role in virion morphogenesis and viral RNA encapsidation by interacting with the capsid protein VP3. Localizes the viral replication complex to the surface of membranous vesicles. Together with protein 3CD binds the Cis-Active RNA Element (CRE) which is involved in RNA synthesis initiation. Acts as a cofactor to stimulate the activity of 3D polymerase, maybe through a nucleid acid chaperone activity. Its function is as follows. Localizes the viral replication complex to the surface of membranous vesicles. It inhibits host cell endoplasmic reticulum-to-Golgi apparatus transport and causes the disassembly of the Golgi complex, possibly through GBF1 interaction. This would result in depletion of MHC, trail receptors and IFN receptors at the host cell surface. Plays an essential role in viral RNA replication by recruiting ACBD3 and PI4KB at the viral replication sites, thereby allowing the formation of the rearranged membranous structures where viral replication takes place. Functionally, acts as a primer for viral RNA replication and remains covalently bound to viral genomic RNA. VPg is uridylylated prior to priming replication into VPg-pUpU. The oriI viral genomic sequence may act as a template for this. The VPg-pUpU is then used as primer on the genomic RNA poly(A) by the RNA-dependent RNA polymerase to replicate the viral genome. During genome replication, the VPg-RNA linkage is removed by the host TDP2, thereby accelerating replication. During the late stage of the replication cycle, host TDP2 is excluded from sites of viral RNA synthesis and encapsidation, allowing for the generation of progeny virions. In terms of biological role, involved in the viral replication complex and viral polypeptide maturation. It exhibits protease activity with a specificity and catalytic efficiency that is different from protease 3C. Protein 3CD lacks polymerase activity. Protein 3CD binds to the 5'UTR of the viral genome. Replicates the viral genomic RNA on the surface of intracellular membranes. May form linear arrays of subunits that propagate along a strong head-to-tail interaction called interface-I. Covalently attaches UMP to a tyrosine of VPg, which is used to prime RNA synthesis. The positive stranded RNA genome is first replicated at virus induced membranous vesicles, creating a dsRNA genomic replication form. This dsRNA is then used as template to synthesize positive stranded RNA genomes. ss(+)RNA genomes are either translated, replicated or encapsidated. Its function is as follows. Major viral protease that mediates proteolytic processing of the polyprotein. Cleaves host EIF5B, contributing to host translation shutoff. Also cleaves host PABPC1, contributing to host translation shutoff. Cleaves host NLRP1, triggers host N-glycine-mediated degradation of the autoinhibitory NLRP1 N-terminal fragment. The sequence is that of Genome polyprotein from Coxsackievirus A9 (strain Griggs).